A 200-amino-acid polypeptide reads, in one-letter code: 2,3-bisphosphoglycerate-dependent phosphoglycerate mutase (200 aa).

The Tele-phosphohistidine intermediate role is filled by histidine 9. Histidine 142 is an active-site residue.

Belongs to the phosphoglycerate mutase family. Homodimer.

It catalyses the reaction (2R)-2-phosphoglycerate = (2R)-3-phosphoglycerate. The protein operates within carbohydrate degradation; glycolysis; pyruvate from D-glyceraldehyde 3-phosphate: step 3/5. In terms of biological role, catalyzes the interconversion of 2-phosphoglycerate and 3-phosphoglycerate. The sequence is that of 2,3-bisphosphoglycerate-dependent phosphoglycerate mutase from Thermoplasma acidophilum (strain ATCC 25905 / DSM 1728 / JCM 9062 / NBRC 15155 / AMRC-C165).